A 513-amino-acid chain; its full sequence is Ribonuclease Y (513 aa).

A helical membrane pass occupies residues 6–26 (YIIIAVVIIIICVILGLYIVD). The KH domain occupies 203–288 (TVHVVNLPND…EMVEKAKKEV (86 aa)). One can recognise an HD domain in the interval 329-422 (VLKHSIEVSH…VQAADAISAA (94 aa)).

The protein belongs to the RNase Y family.

It localises to the cell membrane. In terms of biological role, endoribonuclease that initiates mRNA decay. In Clostridium botulinum (strain ATCC 19397 / Type A), this protein is Ribonuclease Y.